The following is a 247-amino-acid chain: MPRLKLLHGFHAITARLRAFPATVNEVWYDPARQDARMRAFLHLAASANARLIAADASRLNALSGEKRHQGVVARVTEATRAHSLETLLDTIEGQPLLLALDGVTDPHNLGACLRVADGAGAHAVIAPRRRAAGLTAAAAKAANGAAETVPYLTVINLARALRALKNAGIQVIGTADDATTSLFDIQLDGALALVMGAEGAGMRRLTREACDEVVRIPLAGHVQSLNVSVASGICLFEAVRQRLKRL.

G197, I217, and L226 together coordinate S-adenosyl-L-methionine.

This sequence belongs to the class IV-like SAM-binding methyltransferase superfamily. RNA methyltransferase TrmH family. RlmB subfamily.

Its subcellular location is the cytoplasm. It carries out the reaction guanosine(2251) in 23S rRNA + S-adenosyl-L-methionine = 2'-O-methylguanosine(2251) in 23S rRNA + S-adenosyl-L-homocysteine + H(+). Functionally, specifically methylates the ribose of guanosine 2251 in 23S rRNA. The protein is 23S rRNA (guanosine-2'-O-)-methyltransferase RlmB of Burkholderia sp.